Reading from the N-terminus, the 161-residue chain is Phosphopantetheine adenylyltransferase (161 aa).

Ser-9 is a substrate binding site. ATP-binding positions include 9-10 (SF) and His-17. Substrate is bound by residues Lys-41, Leu-73, and Lys-87. ATP contacts are provided by residues 88–90 (GLR), Glu-98, and 123–129 (YSYLSSS).

Belongs to the bacterial CoaD family. Homohexamer. Mg(2+) serves as cofactor.

It is found in the cytoplasm. It carries out the reaction (R)-4'-phosphopantetheine + ATP + H(+) = 3'-dephospho-CoA + diphosphate. Its pathway is cofactor biosynthesis; coenzyme A biosynthesis; CoA from (R)-pantothenate: step 4/5. Its function is as follows. Reversibly transfers an adenylyl group from ATP to 4'-phosphopantetheine, yielding dephospho-CoA (dPCoA) and pyrophosphate. This Clostridium novyi (strain NT) protein is Phosphopantetheine adenylyltransferase.